Reading from the N-terminus, the 288-residue chain is MALFRKKDKYIRITPNNFLKGSVSHNVPEVPDELFAKCPACKHMIYKKDLGLAKICPTCSYNFRISAQERLTLTVDEGSFQELFTSIETKDPLRFPGYQEKLQKAKETTGLHEAVLTGKAMVKGQQIALAIMDSHFIMASMGTVVGEKITRLFELAIEENLPVVIFTASGGARMQEGIMSLMQMAKVSAAVKRHSNAGLFYLTILTDPTTGGVTASFAMEGDIILAEPQSLVGFAGRRVIETTVRENLPDDFQKAEFLQDHGFVDAIVKRTELRDKIAHLVAFHGGGQ.

Residues 34-288 form the CoA carboxyltransferase N-terminal domain; that stretch reads LFAKCPACKH…HLVAFHGGGQ (255 aa). Residues Cys38, Cys41, Cys56, and Cys59 each contribute to the Zn(2+) site. The segment at 38–59 adopts a C4-type zinc-finger fold; that stretch reads CPACKHMIYKKDLGLAKICPTC.

Belongs to the AccD/PCCB family. As to quaternary structure, acetyl-CoA carboxylase is a heterohexamer composed of biotin carboxyl carrier protein (AccB), biotin carboxylase (AccC) and two subunits each of ACCase subunit alpha (AccA) and ACCase subunit beta (AccD). Requires Zn(2+) as cofactor.

The protein localises to the cytoplasm. It catalyses the reaction N(6)-carboxybiotinyl-L-lysyl-[protein] + acetyl-CoA = N(6)-biotinyl-L-lysyl-[protein] + malonyl-CoA. Its pathway is lipid metabolism; malonyl-CoA biosynthesis; malonyl-CoA from acetyl-CoA: step 1/1. Its function is as follows. Component of the acetyl coenzyme A carboxylase (ACC) complex. Biotin carboxylase (BC) catalyzes the carboxylation of biotin on its carrier protein (BCCP) and then the CO(2) group is transferred by the transcarboxylase to acetyl-CoA to form malonyl-CoA. The chain is Acetyl-coenzyme A carboxylase carboxyl transferase subunit beta from Streptococcus pyogenes serotype M6 (strain ATCC BAA-946 / MGAS10394).